Consider the following 460-residue polypeptide: Tyrosine-protein phosphatase non-receptor type 18 (460 aa).

Residues 26–291 enclose the Tyrosine-protein phosphatase domain; sequence LAGEFSDIQA…RFLYHTVAQM (266 aa). Residues Asp197, 229–235, and Gln276 each bind substrate; that span reads CSAGCGR. Cys229 functions as the Phosphocysteine intermediate in the catalytic mechanism. Positions 361–460 are disordered; it reads GAPAGAGSGT…RDPPAEWTRV (100 aa). Residues 364-378 show a composition bias toward gly residues; that stretch reads AGAGSGTQTGTGTGT. Tyr389 carries the post-translational modification Phosphotyrosine. Position 393 is a phosphothreonine (Thr393). The residue at position 426 (Tyr426) is a Phosphotyrosine. Residues 449 to 460 are compositionally biased toward basic and acidic residues; sequence GPRDPPAEWTRV.

The protein belongs to the protein-tyrosine phosphatase family. Non-receptor class 4 subfamily. Interacts with PSTPIP1. Expressed in brain, colon and several tumor-derived cell lines.

Its subcellular location is the nucleus. It localises to the cytoplasm. The enzyme catalyses O-phospho-L-tyrosyl-[protein] + H2O = L-tyrosyl-[protein] + phosphate. Its function is as follows. Differentially dephosphorylate autophosphorylated tyrosine kinases which are known to be overexpressed in tumor tissues. In Homo sapiens (Human), this protein is Tyrosine-protein phosphatase non-receptor type 18 (PTPN18).